Here is a 206-residue protein sequence, read N- to C-terminus: Small ribosomal subunit protein uS4 (206 aa).

Residues 96 to 156 (QRLDNVVYRM…EKSKTQARII (61 aa)) form the S4 RNA-binding domain.

Belongs to the universal ribosomal protein uS4 family. Part of the 30S ribosomal subunit. Contacts protein S5. The interaction surface between S4 and S5 is involved in control of translational fidelity.

One of the primary rRNA binding proteins, it binds directly to 16S rRNA where it nucleates assembly of the body of the 30S subunit. Its function is as follows. With S5 and S12 plays an important role in translational accuracy. The sequence is that of Small ribosomal subunit protein uS4 from Pseudoalteromonas translucida (strain TAC 125).